The chain runs to 750 residues: Elastin (750 aa).

Residues 1-24 (ARQAAAPLLPGVLLLFSILPASQQ) form the signal peptide. A 4-hydroxyproline mark is found at proline 32, proline 67, proline 102, proline 176, proline 189, proline 192, and proline 211. Repeat 1 spans residues 83 to 127 (GAGVGGLGAGLGAFPGAAFPGAASAAALKAAAKAGAGLGGVGGIG). Residues 83-686 (GAGVGGLGAG…GVGGLGVGGL (604 aa)) are 8 X tandem repeats. 7 tandem repeats follow at residues 219–262 (VNGL…AGVL), 263–318 (PGAG…GVPG), 319–393 (VVPG…VPGV), 394–482 (PGVP…VPGV), 483–554 (GVPG…VGGL), 555–619 (VPGV…PGVT), and 620–686 (PGVG…VGGL). 4-hydroxyproline occurs at positions 276, 345, 363, 368, 441, 455, and 480. 4-hydroxyproline occurs at positions 576, 635, and 720. Cysteines 739 and 745 form a disulfide.

This sequence belongs to the elastin family. In terms of assembly, the polymeric elastin chains are cross-linked together into an extensible 3D network. Post-translationally, elastin is formed through the cross-linking of its soluble precursor tropoelastin. Cross-linking is initiated through the action of lysyl oxidase on exposed lysines to form allysine. Subsequent spontaneous condensation reactions with other allysine or unmodified lysine residues result in various bi-, tri-, and tetrafunctional cross-links. The most abundant cross-links in mature elastin fibers are lysinonorleucine, allysine aldol, desmosine, and isodesmosine. In terms of processing, hydroxylated on proline residues. Hydroxylation on proline residues within the sequence motif, GXPG, is most likely to be 4-hydroxy as this fits the requirement for 4-hydroxylation in vertebrates.

Its subcellular location is the secreted. It localises to the extracellular space. The protein resides in the extracellular matrix. Its function is as follows. Major structural protein of tissues such as aorta and nuchal ligament, which must expand rapidly and recover completely. The chain is Elastin (ELN) from Gallus gallus (Chicken).